Reading from the N-terminus, the 489-residue chain is Betaine aldehyde dehydrogenase (489 aa).

K(+) contacts are provided by Thr-26 and Asp-93. An NAD(+)-binding site is contributed by 150-152 (GAW). The active-site Charge relay system is the Lys-162. NAD(+) is bound at residue 176-179 (KPSE). Ile-180 lines the K(+) pocket. Residue 229 to 232 (GVET) coordinates NAD(+). Leu-245 lines the K(+) pocket. Glu-251 (proton acceptor) is an active-site residue. NAD(+) contacts are provided by Gly-253, Cys-285, and Glu-386. The active-site Nucleophile is the Cys-285. Cys-285 is modified (cysteine sulfenic acid (-SOH)). 2 residues coordinate K(+): Lys-456 and Gly-459. The active-site Charge relay system is Glu-463.

It belongs to the aldehyde dehydrogenase family. Dimer of dimers. The cofactor is K(+).

It carries out the reaction betaine aldehyde + NAD(+) + H2O = glycine betaine + NADH + 2 H(+). Its pathway is amine and polyamine biosynthesis; betaine biosynthesis via choline pathway; betaine from betaine aldehyde: step 1/1. Functionally, involved in the biosynthesis of the osmoprotectant glycine betaine. Catalyzes the irreversible oxidation of betaine aldehyde to the corresponding acid. The sequence is that of Betaine aldehyde dehydrogenase from Paraburkholderia xenovorans (strain LB400).